The following is a 163-amino-acid chain: MPQVVEVLVEGGKASPGPPLGPAIGPLGLNVKQVVDEINKATKDFEGMQVPVKIIVEDPKKKTFRIEVGVPPVSQLIKKELGIPKGSSEAGHSPVGNLTMEQVIRIAKAKMDQMLAADLKAAAKEVIGTALSMGVTVEGKDPREVQKEIDEGVYDEIFANAEE.

The protein belongs to the universal ribosomal protein uL11 family. In terms of assembly, part of the ribosomal stalk of the 50S ribosomal subunit. Interacts with L10 and the large rRNA to form the base of the stalk. L10 forms an elongated spine to which L12 dimers bind in a sequential fashion forming a multimeric L10(L12)X complex.

Its function is as follows. Forms part of the ribosomal stalk which helps the ribosome interact with GTP-bound translation factors. This is Large ribosomal subunit protein uL11 from Thermococcus onnurineus (strain NA1).